The following is a 420-amino-acid chain: Glucose-1-phosphate adenylyltransferase (420 aa).

Residues Tyr107, Gly173, 188–189 (EK), and Ser206 contribute to the alpha-D-glucose 1-phosphate site.

It belongs to the bacterial/plant glucose-1-phosphate adenylyltransferase family. In terms of assembly, homotetramer.

It catalyses the reaction alpha-D-glucose 1-phosphate + ATP + H(+) = ADP-alpha-D-glucose + diphosphate. Its pathway is glycan biosynthesis; glycogen biosynthesis. In terms of biological role, involved in the biosynthesis of ADP-glucose, a building block required for the elongation reactions to produce glycogen. Catalyzes the reaction between ATP and alpha-D-glucose 1-phosphate (G1P) to produce pyrophosphate and ADP-Glc. The protein is Glucose-1-phosphate adenylyltransferase of Shewanella baltica (strain OS155 / ATCC BAA-1091).